Here is a 330-residue protein sequence, read N- to C-terminus: MQGSVTEFLKPRLVDIEQISTTHAKVTLEPLERGFGHTLGNALRRILLSSMPGCAVTEVEIEGVLHEYSTKEGVQEDILEILLNLKGLAVRVAEGKDEVFITLNKSGSGPVVAGDITHDGDVEIVNPEHVICHLTSDNAAIAMRIKVERGRGYVPASARIHTEEDERPIGRLLVDATFSPVDKIAYSVEAARVEQRTDLDKLVIDMETNGTLEPEEAIRRAATILAEQLDAFVDLRDVRVPEEKEEKPEFDPILLRPVDDLELTVRSANCLKAEAIHYIGDLVQRTEVELLKTPNLGKKSLTEIKDVLASRGLSLGMRLENWPPASIAED.

Residues Met1–Arg236 form an alpha N-terminal domain (alpha-NTD) region. An alpha C-terminal domain (alpha-CTD) region spans residues Phe250–Asp330.

Belongs to the RNA polymerase alpha chain family. Homodimer. The RNAP catalytic core consists of 2 alpha, 1 beta, 1 beta' and 1 omega subunit. When a sigma factor is associated with the core the holoenzyme is formed, which can initiate transcription.

It catalyses the reaction RNA(n) + a ribonucleoside 5'-triphosphate = RNA(n+1) + diphosphate. DNA-dependent RNA polymerase catalyzes the transcription of DNA into RNA using the four ribonucleoside triphosphates as substrates. The chain is DNA-directed RNA polymerase subunit alpha from Vibrio cholerae serotype O1 (strain ATCC 39315 / El Tor Inaba N16961).